Consider the following 2327-residue polypeptide: MVRFGDELGGRYGGTGGGERARGGGAGGAGGPGQGGLPPGQRVLYKQSIAQRARTMALYNPIPVKQNCFTVNRSLFVFSEDNVVRKYAKRITEWPPFEYMILATIIANCIVLALEQHLPDGDKTPMSERLDDTEPYFIGIFCFEAGIKIIALGFVFHKGSYLRNGWNVMDFVVVLTGILATAGTDFDLRTLRAVRVLRPLKLVSGIPSLQVVLKSIMKAMVPLLQIGLLLFFAILMFAIIGLEFYMGKFHKACFPNSTDTEPVGDFPCGKDPPARQCDGDTECREYWPGPNFGITNFDNILFAILTVFQCITMEGWTDILYNTNDAAGNTWNWLYFIPLIIIGSFFMLNLVLGVLSGEFAKERERVENRRAFLKLRRQQQIERELNGYLEWIFKAEEVMLAEEDKNAEEKSPLDVLKRAATKKSRNDLIHAEEGEDRFVDLCAVGSPFARASLKSGKTESSSYFRRKEKMFRFFIRRMVKAQSFYWVVLCVVALNTLCVAMVHYNQPQRLTTALYFAEFVFLGLFLTEMSLKMYGLGPRSYFRSSFNCFDFGVIVGSIFEVVWAAIKPGTSFGISVLRALRLLRIFKVTKYWNSLRNLVVSLLNSMKSIISLLFLLFLFIVVFALLGMQLFGGQFNFQDETPTTNFDTFPAAILTVFQILTGEDWNAVMYHGIESQGGVSKGMFSSFYFIVLTLFGNYTLLNVFLAIAVDNLANAQELTKDEEEMEEAANQKLALQKAKEVAEVSPMSAANISIAARQQNSAKARSVWEQRASQLRLQNLRASCEALYSEMDPEERLRYASTRHVRPDMKTHMDRPLVVEPGRDGLRGPVGSKSKPEGTEATESADLPRRHHRHRDRDKTSATAPAGGEQDRTESTETGAREERARPRRSHSKETPGADTQVRCERSRRHHRRGSPEEATEREPRRHRAHRHAQDSSKEGTAPVLVPKGERRARHRGPRTGPREAENNEEPTRRHRARHKVPPTLQPPEREAAEKESNAVEGDKETRNHQPKEPHCDLEAIAVTGVGPLHMLPSTCLQKVDEQPEDADNQRNVTRMGSQPSDPSTTVHVPVTLTGPPGETPVVPSGNMNLEGQAEGKKEAEADDVLRRGPRPIVPYSSMFCLSPTNLLRRFCHYIVTMRYFEMVILVVIALSSIALAAEDPVRTDSFRNNALKYMDYIFTGVFTFEMVIKMIDLGLLLHPGAYFRDLWNILDFIVVSGALVAFAFSSFMGGSKGKDINTIKSLRVLRVLRPLKTIKRLPKLKAVFDCVVNSLKNVLNILIVYMLFMFIFAVIAVQLFKGKFFYCTDESKELERDCRGQYLDYEKEEVEAQPRQWKKYDFHYDNVLWALLTLFTVSTGEGWPMVLKHSVDATYEEQGPSPGFRMELSIFYVVYFVVFPFFFVNIFVALIIITFQEQGDKVMSECSLEKNERACIDFAISAKPLTRYMPQNKQSFQYKTWTFVVSPPFEYFIMAMIALNTVVLMMKFYDAPYEYELMLKCLNIVFTSMFSMECILKIIAFGVLNYFRDAWNVFDFVTVLGSITDILVTEIANNFINLSFLRLFRAARLIKLLRQGYTIRILLWTFVQSFKALPYVCLLIAMLFFIYAIIGMQVFGNIALDDDTSINRHNNFRTFLQALMLLFRSATGEAWHEIMLSCLGNRACDPHANASECGSDFAYFYFVSFIFLCSFLMLNLFVAVIMDNFEYLTRDSSILGPHHLDEFIRVWAEYDPAACGRISYNDMFEMLKHMSPPLGLGKKCPARVAYKRLVRMNMPISNEDMTVHFTSTLMALIRTALEIKLAPAGTKQHQCDAELRKEISSVWANLPQKTLDLLVPPHKPDEMTVGKVYAALMIFDFYKQNKTTRDQTHQAPGGLSQMGPVSLFHPLKATLEQTQPAVLRGARVFLRQKSATSLSNGGAIQTQESGIKESLSWGTQRTQDALYEARAPLERGHSAEIPVGQSGTLAVDVQMQNMTLRGPDGEPQPGLESQGRAASMPRLAAETQPAPNASPMKRSISTLAPRPHGTQLCSTVLDRPPPSQASHHHHHRCHRRRDKKQRSLEKGPSLSVDPEGAPSTAAGPGLPHGEGSTACRRDRKQERGRSQERRQPSSSSSEKQRFYSCDRFGSREPPQLMPSLSSHPTSPTAALEPAPHPQGSGSVNGSPLMSTSGASTPGRGGRRQLPQTPLTPRPSITYKTANSSPVHFAEGQSGLPAFSPGRLSRGLSEHNALLQKEPLSQPLAPGSRIGSDPYLGQRLDSEASAHTLPEDTLTFEEAVATNSGRSSRTSYVSSLTSQSHPLRRVPNGYHCTLGLSTGVRARHSYHHPDQDHWC.

A disordered region spans residues 1-37 (MVRFGDELGGRYGGTGGGERARGGGAGGAGGPGQGGL). Residues 1–90 (MVRFGDELGG…DNVVRKYAKR (90 aa)) are Cytoplasmic-facing. Over residues 10 to 37 (GRYGGTGGGERARGGGAGGAGGPGQGGL) the composition is skewed to gly residues. At R22 the chain carries Omega-N-methylarginine. One copy of the I repeat lies at 82–359 (NVVRKYAKRI…LVLGVLSGEF (278 aa)). Residues 91 to 114 (ITEWPPFEYMILATIIANCIVLAL) form a helical membrane-spanning segment. Residues 115 to 131 (EQHLPDGDKTPMSERLD) are Extracellular-facing. The chain crosses the membrane as a helical span at residues 132 to 152 (DTEPYFIGIFCFEAGIKIIAL). The Cytoplasmic segment spans residues 153–163 (GFVFHKGSYLR). The chain crosses the membrane as a helical span at residues 164–182 (NGWNVMDFVVVLTGILATA). Residues 183 to 187 (GTDFD) lie on the Extracellular side of the membrane. Residues 188–211 (LRTLRAVRVLRPLKLVSGIPSLQV) traverse the membrane as a helical segment. Topologically, residues 212-221 (VLKSIMKAMV) are cytoplasmic. Residues 222–244 (PLLQIGLLLFFAILMFAIIGLEF) traverse the membrane as a helical segment. Topologically, residues 245-331 (YMGKFHKACF…NTNDAAGNTW (87 aa)) are extracellular. N256 carries N-linked (GlcNAc...) asparagine glycosylation. A helical transmembrane segment spans residues 332–356 (NWLYFIPLIIIGSFFMLNLVLGVLS). The Cytoplasmic portion of the chain corresponds to 357–482 (GEFAKERERV…FFIRRMVKAQ (126 aa)). Residues 379-396 (QQIERELNGYLEWIFKAE) are binding to the beta subunit. Residue S411 is modified to Phosphoserine. Position 451–458 (451–458 (ASLKSGKT)) interacts with ATP. The II repeat unit spans residues 468–712 (EKMFRFFIRR…VFLAIAVDNL (245 aa)). A helical transmembrane segment spans residues 483–501 (SFYWVVLCVVALNTLCVAM). Residues 502–511 (VHYNQPQRLT) lie on the Extracellular side of the membrane. The chain crosses the membrane as a helical span at residues 512–534 (TALYFAEFVFLGLFLTEMSLKMY). Residues 535–544 (GLGPRSYFRS) are Cytoplasmic-facing. S544 serves as a coordination point for a 1,2-diacyl-sn-glycero-3-phospho-(1D-myo-inositol-4,5-bisphosphate). A helical transmembrane segment spans residues 545–566 (SFNCFDFGVIVGSIFEVVWAAI). The Extracellular segment spans residues 567-573 (KPGTSFG). The chain crosses the membrane as a helical span at residues 574-586 (ISVLRALRLLRIF). Positions 584 and 587 each coordinate a 1,2-diacyl-sn-glycero-3-phospho-(1D-myo-inositol-4,5-bisphosphate). At 587–604 (KVTKYWNSLRNLVVSLLN) the chain is on the cytoplasmic side. The helical transmembrane segment at 605 to 630 (SMKSIISLLFLLFLFIVVFALLGMQL) threads the bilayer. The Extracellular portion of the chain corresponds to 631–682 (FGGQFNFQDETPTTNFDTFPAAILTVFQILTGEDWNAVMYHGIESQGGVSKG). Residues 683-709 (MFSSFYFIVLTLFGNYTLLNVFLAIAV) form a helical membrane-spanning segment. The Cytoplasmic portion of the chain corresponds to 710–1140 (DNLANAQELT…FCHYIVTMRY (431 aa)). 3 positions are modified to phosphoserine: S745, S748, and S783. Disordered stretches follow at residues 802–1015 (TRHV…KEPH) and 1042–1066 (EQPE…PSTT). Basic and acidic residues-rich tracts occupy residues 805–826 (VRPD…RDGL), 869–885 (EQDR…EERA), 914–924 (GSPEEATEREP), 961–972 (GPREAENNEEPT), and 988–1015 (PERE…KEPH). A compositionally biased stretch (polar residues) spans 1050–1066 (QRNVTRMGSQPSDPSTT). S1058 is modified (phosphoserine). An III repeat occupies 1126–1412 (NLLRRFCHYI…IFVALIIITF (287 aa)). Residues 1141 to 1159 (FEMVILVVIALSSIALAAE) form a helical membrane-spanning segment. Topologically, residues 1160–1167 (DPVRTDSF) are extracellular. The chain crosses the membrane as a helical span at residues 1168–1192 (RNNALKYMDYIFTGVFTFEMVIKMI). Residues 1193-1206 (DLGLLLHPGAYFRD) are Cytoplasmic-facing. A helical transmembrane segment spans residues 1207 to 1231 (LWNILDFIVVSGALVAFAFSSFMGG). Residues 1232–1237 (SKGKDI) lie on the Extracellular side of the membrane. Residues 1238-1258 (NTIKSLRVLRVLRPLKTIKRL) traverse the membrane as a helical segment. The Cytoplasmic portion of the chain corresponds to 1259-1276 (PKLKAVFDCVVNSLKNVL). The chain crosses the membrane as a helical span at residues 1277–1296 (NILIVYMLFMFIFAVIAVQL). The Extracellular portion of the chain corresponds to 1297–1383 (FKGKFFYCTD…EQGPSPGFRM (87 aa)). The chain crosses the membrane as a helical span at residues 1384-1409 (ELSIFYVVYFVVFPFFFVNIFVALII). Residues 1410–1464 (ITFQEQGDKVMSECSLEKNERACIDFAISAKPLTRYMPQNKQSFQYKTWTFVVSP) lie on the Cytoplasmic side of the membrane. Residues 1449–1702 (NKQSFQYKTW…LFVAVIMDNF (254 aa)) form an IV repeat. The chain crosses the membrane as a helical span at residues 1465–1483 (PFEYFIMAMIALNTVVLMM). At 1484 to 1491 (KFYDAPYE) the chain is on the extracellular side. The helical transmembrane segment at 1492 to 1516 (YELMLKCLNIVFTSMFSMECILKII) threads the bilayer. Residues 1517-1526 (AFGVLNYFRD) lie on the Cytoplasmic side of the membrane. Residues 1527–1548 (AWNVFDFVTVLGSITDILVTEI) traverse the membrane as a helical segment. Over 1549–1554 (ANNFIN) the chain is Extracellular. The N-linked (GlcNAc...) asparagine glycan is linked to N1554. The chain crosses the membrane as a helical span at residues 1555–1573 (LSFLRLFRAARLIKLLRQG). The Cytoplasmic segment spans residues 1574 to 1592 (YTIRILLWTFVQSFKALPY). The helical transmembrane segment at 1593–1612 (VCLLIAMLFFIYAIIGMQVF) threads the bilayer. Over 1613–1674 (GNIALDDDTS…ANASECGSDF (62 aa)) the chain is Extracellular. The N-linked (GlcNAc...) asparagine glycan is linked to N1666. The chain crosses the membrane as a helical span at residues 1675-1698 (AYFYFVSFIFLCSFLMLNLFVAVI). At 1699 to 2327 (MDNFEYLTRD…YHHPDQDHWC (629 aa)) the chain is on the cytoplasmic side. The EF-hand domain maps to 1715–1750 (HHLDEFIRVWAEYDPAACGRISYNDMFEMLKHMSPP). Ca(2+) is bound by residues D1728, R1734, and D1739. Residues 1972 to 2193 (TLRGPDGEPQ…TPRPSITYKT (222 aa)) form a disordered region. Residues 2039-2053 (SHHHHHRCHRRRDKK) show a composition bias toward basic residues. Phosphoserine is present on S2056. Positions 2088 to 2104 (CRRDRKQERGRSQERRQ) are enriched in basic and acidic residues. Polar residues-rich tracts occupy residues 2131–2141 (PSLSSHPTSPT) and 2152–2168 (GSGS…SGAS). 3 positions are modified to phosphoserine: S2212, S2221, and S2244. 2 disordered regions span residues 2230–2249 (EPLS…PYLG) and 2273–2292 (ATNS…TSQS). Positions 2276–2292 (SGRSSRTSYVSSLTSQS) are enriched in low complexity.

Belongs to the calcium channel alpha-1 subunit (TC 1.A.1.11) family. CACNA1B subfamily. In terms of assembly, multisubunit complex consisting of alpha-1, alpha-2, beta and delta subunits in a 1:1:1:1 ratio. The channel activity is directed by the pore-forming and voltage-sensitive alpha-1 subunit. In many cases, this subunit is sufficient to generate voltage-sensitive calcium channel activity. The auxiliary subunits beta and alpha-2/delta linked by a disulfide bridge regulate the channel activity. Interacts with RIMS1. Interacts with FMR1 (via C-terminus); this interaction induces a decrease in the number of presynaptic functional CACNA1B channels at the cell surface. Phosphorylated in vitro by CaM-kinase II, PKA, PKC and CGPK. In terms of tissue distribution, widespread expression throughout the brain. Highest levels in pyramidal cell layers C1, C2 and C3 of the hippocampus, in the dentate gyrus, in the cortex layers 2 et 4, in the subiculum and the habenula.

Its subcellular location is the membrane. The enzyme catalyses Ca(2+)(in) = Ca(2+)(out). Its activity is regulated as follows. Is specifically blocked by omega-conotoxin GVIA. Is specifically blocked by omega-conotoxin MVIIA (ziconotide). Is insensitive to dihydropyridines (DHP). In terms of biological role, voltage-sensitive calcium channels (VSCC) mediate the entry of calcium ions into excitable cells and are also involved in a variety of calcium-dependent processes, including muscle contraction, hormone or neurotransmitter release, gene expression, cell motility, cell division and cell death. This alpha-1B subunit gives rise to N-type calcium currents. N-type calcium channels belong to the 'high-voltage activated' (HVA) group. They are involved in pain signaling. Calcium channels containing alpha-1B subunit may play a role in directed migration of immature neurons. Mediates Ca(2+) release probability at hippocampal neuronal soma and synaptic terminals. The protein is Voltage-dependent N-type calcium channel subunit alpha-1B (Cacna1b) of Mus musculus (Mouse).